Reading from the N-terminus, the 816-residue chain is Phenylalanine--tRNA ligase beta subunit (816 aa).

The region spanning 40-148 is the tRNA-binding domain; sequence FEELAALKTG…EGMAHGQRFI (109 aa). In terms of domain architecture, B5 spans 401 to 479; that stretch reads KAVEVQRFSI…RIYGYDNVPT (79 aa). Positions 457, 463, 466, and 467 each coordinate Mg(2+). One can recognise an FDX-ACB domain in the interval 721–814; the sequence is PVYPAVKRDI…LTDRFGGSFR (94 aa).

Belongs to the phenylalanyl-tRNA synthetase beta subunit family. Type 1 subfamily. Tetramer of two alpha and two beta subunits. It depends on Mg(2+) as a cofactor.

It localises to the cytoplasm. It catalyses the reaction tRNA(Phe) + L-phenylalanine + ATP = L-phenylalanyl-tRNA(Phe) + AMP + diphosphate + H(+). This Desulfotalea psychrophila (strain LSv54 / DSM 12343) protein is Phenylalanine--tRNA ligase beta subunit.